The sequence spans 2363 residues: MTTTVATDYDNIEIQQQYSDVNNRWDVDDWDNENSSARLFERSRIKALADEREAVQKKTFTKWVNSHLARVSCRITDLYTDLRDGRMLIKLLEVLSGERLPKPTKGRMRIHCLENVDKALQFLKEQRVHLENMGSHDIVDGNHRLTLGLIWTIILRFQIQDISVETEDNKEKKSAKDALLLWCQMKTAGYPNVNIHNFTTSWRDGMAFNALIHKHRPDLIDFDKLKKSNAHYNLQNAFNLAEQHLGLTKLLDPEDISVDHPDEKSIITYVVTYYHYFSKMKALAVEGKRIGKVLDNAIETEKMIEKYESLASDLLEWIEQTIIILNNRKFANSLVGVQQQLQAFNTYRTVEKPPKFTEKGNLEVLLFTIQSKMRANNQKVYMPREGKLISDINKAWERLEKAEHERELALRNELIRQEKLEQLARRFDRKAAMRETWLSENQRLVSQDNFGFDLPAVEAATKKHEAIETDIAAYEERVQAVVAVARELEAENYHDIKRITARKDNVIRLWEYLLELLRARRQRLEMNLGLQKIFQEMLYIMDWMDEMKVLLLSQDYGKHLLGVEDLLQKHALVEADIAIQAERVRGVNASAQKFATDGEGYKPCDPQVIRDRVAHMEFCYQELCQLAAERRARLEESRRLWKFFWEMAEEEGWIREKEKILSSDDYGKDLTSVMRLLSKHRAFEDEMSGRSGHFEQAIKEGEDMIAEEHFGSEKIRERIIYIREQWANLEQLSAIRKKRLEEASLLHQFQADADDIDAWMLDILKIVSSNDVGHDEYSTQSLVKKHKDVAEEITNYRPTIDTLHEQASALPQAHAESPDVKGRLAGIEERCKEMAELTRLRKQALQDTLALYKMFSEADACELWIDEKEQWLNNMQIPEKLEDLEVIQHRFESLEPEMNNQASRVAVVNQIARQLMHNGHPSEKEIRAQQDKLNTRWSQFRELVDRKKDALLSALSIQNYHLECNETKSWIREKTKVIESTQDLGNDLAGVMALQRKLTGMERDLVAIEAKLSDLQKEAEKLESEHPDQAQAILSRLAEISDVWEEMKTTLKNREASLGEASKLQQFLRDLDDFQSWLSRTQTAIASEDMPNTLTEAEKLLTQHENIKNEIDNYEEDYQKMRDMGEMVTQGQTDAQYMFLRQRLQALDTGWNELHKMWENRQNLLSQSHAYQQFLRDTKQAEAFLNNQEYVLAHTEMPTTLEGAEAAIKKQEDFMTTMDANEEKINAVVETGRRLVSDGNINSDRIQEKVDSIDDRHRKNREAASELLMRLKDNRDLQKFLQDCQELSLWINEKMLTAQDMSYDEARNLHSKWLKHQAFMAELASNKEWLDKIEKEGMQLISEKPETEAVVKEKLTGLHKMWEVLESTTQTKAQRLFDANKAELFTQSCADLDKWLHGLESQIQSDDYGKDLTSVNILLKKQQMLENQMEVRKKEIEELQSQAQALSQEGKSTDEVDSKRLTVQTKFMELLEPLSERKHNLLASKEIHQFNRDVEDEILWVGERMPLATSTDHGHNLQTVQLLIKKNQTLQKEIQGHQPRIDDIFERSQNIITDSSSLNAEAIRQRLADLKQLWGLLIEETEKRHRRLEEAHKAQQYYFDAAEAEAWMSEQELYMMSEEKAKDEQSAVSMLKKHQILEQAVEDYAETVHQLSKTSRALVADSHPESERISMRQSKVDKLYAGLKDLAEERRGKLDERHRLFQLNREVDDLEQWIAEREVVAGSHELGQDYEHVTMLQERFREFARDTGNIGQERVDTVNNMADELINSGHSDAATIAEWKDGLNEAWADLLELIDTRTQILAASYELHKFYHDAKEIFGRIQDKHKKLPEELGRDQNTVETLQRMHTTFEHDIQALGTQVRQLQEDAARLQAAYAGDKADDIQKRENEVLEAWKSLLDACEGRRVRLVDTGDKFRFFSMVRDLMLWMEDVIRQIEAQEKPRDVSSVELLMNNHQGIKAEIDARNDSFTACIELGKSLLARKHYASEEIKEKLLQLTEKRKEMIDKWEDRWEWLRLILEVHQFSRDASVAEAWLLGQEPYLSSREIGQSVDEVEKLIKRHEAFEKSAATWDERFSALERLTTLELLEVRRQQEEEERKRRPPSPDPNTKVSEEAESQQWDTSKGDQVSQNGLPAEQGSPRMAGTMETSEMVNGAAEQRTSSKESSPVPSPTLDRKAKSALPAQSAATLPARTLETPAAQMEGFLNRKHEWEAHNKKASSRSWHNVYCVINNQEMGFYKDAKSAASGIPYHSEVPVSLKEAICEVALDYKKKKHVFKLRLSDGNEYLFQAKDDEEMNTWIQAISSAISSDKHDTSASTQSTPASSRAQTLPTSVVTITSESSPGKREKDKEKDKEKRFSLFGKKK.

Thr-2 carries the N-acetylthreonine modification. The actin-binding stretch occupies residues 2–275; that stretch reads TTTVATDYDN…IITYVVTYYH (274 aa). 2 positions are modified to phosphoserine: Ile-14 and Ser-36. 2 consecutive Calponin-homology (CH) domains span residues 54–158 and 173–278; these read AVQK…LRFQ and KSAK…HYFS. At Lys-90 the chain carries N6-acetyllysine. A Phosphoserine modification is found at Ser-228. Spectrin repeat units follow at residues 303-411, 423-525, 530-636, 639-742, 745-847, 850-952, 957-1060, 1063-1166, 1170-1259, 1276-1376, 1381-1482, 1486-1590, 1592-1696, 1698-1801, and 1805-1907; these read MIEK…LALR, LARR…QRLE, LQKI…RLEE, RLWK…RLEE, LLHQ…ALQD, ALYK…DALL, IQNY…SLGE, KLQQ…NLLS, AYQQ…RHRK, DLQK…AQRL, KAEL…HNLL, EIHQ…RLEE, HKAQ…KLDE, HRLF…TQIL, and YELH…RVRL. Phosphoserine occurs at positions 817, 903, 1057, 1076, 1079, and 1237. A phosphoserine mark is found at Ser-1388, Ser-1447, and Ser-1557. An interaction with ANK2 region spans residues 1563–2093; it reads IRQRLADLKQ…LLEVRRQQEE (531 aa). At Tyr-1805 the chain carries Phosphotyrosine. 3 positions are modified to N6-acetyllysine: Lys-1815, Lys-1913, and Lys-1989. Spectrin repeat units lie at residues 1914-2014 and 2018-2097; these read FRFF…EWLR and EVHQ…EERK. Residues 2089–2193 are disordered; sequence RQQEEEERKR…AATLPARTLE (105 aa). A phosphoserine mark is found at Ser-2102, Ser-2127, and Ser-2137. Over residues 2115–2130 the composition is skewed to polar residues; that stretch reads SQQWDTSKGDQVSQNG. Thr-2146 bears the Phosphothreonine mark. Phosphoserine is present on Ser-2147. The mediates interaction with CAMSAP1 stretch occupies residues 2148 to 2176; the sequence is EMVNGAAEQRTSSKESSPVPSPTLDRKAK. Thr-2158 carries the phosphothreonine modification. A phosphoserine mark is found at Ser-2159, Ser-2160, Ser-2163, Ser-2164, and Ser-2168. Position 2170 is a phosphothreonine (Thr-2170). Ser-2183 is modified (phosphoserine). 2 positions are modified to phosphothreonine: Thr-2186 and Thr-2194. A PH domain is found at 2196–2306; that stretch reads AAQMEGFLNR…WIQAISSAIS (111 aa). Residues 2308–2363 form a disordered region; the sequence is DKHDTSASTQSTPASSRAQTLPTSVVTITSESSPGKREKDKEKDKEKRFSLFGKKK. A phosphoserine mark is found at Ser-2313 and Ser-2318. Over residues 2313–2327 the composition is skewed to low complexity; the sequence is SASTQSTPASSRAQT. Thr-2319 is modified (phosphothreonine). Ser-2323 is a glycosylation site (O-linked (GlcNAc) serine). Residue Thr-2327 is modified to Phosphothreonine. Residues 2328–2340 are compositionally biased toward polar residues; sequence LPTSVVTITSESS. A phosphoserine mark is found at Ser-2339 and Ser-2340. The segment covering 2341–2356 has biased composition (basic and acidic residues); sequence PGKREKDKEKDKEKRF.

This sequence belongs to the spectrin family. As to quaternary structure, interacts with ANK2. Interacts with CPNE4 (via VWFA domain). Like erythrocyte spectrin, the spectrin-like proteins are capable to form dimers which can further associate to tetramers. Interacts with CAMSAP1. Can form heterodimers with SPTAN1. Isoform 2 is present in brain, heart, kidney and liver (at protein level).

Its subcellular location is the cytoplasm. It is found in the cytoskeleton. It localises to the endomembrane system. The protein localises to the myofibril. The protein resides in the sarcomere. Its subcellular location is the m line. It is found in the cytosol. It localises to the cell membrane. Fodrin, which seems to be involved in secretion, interacts with calmodulin in a calcium-dependent manner and is thus candidate for the calcium-dependent movement of the cytoskeleton at the membrane. Plays a critical role in central nervous system development and function. The chain is Spectrin beta chain, non-erythrocytic 1 (Sptbn1) from Mus musculus (Mouse).